A 132-amino-acid chain; its full sequence is Pro-MCH 2 (132 aa).

An N-terminal signal peptide occupies residues 1–24; that stretch reads MRDSVLSVIFALALFLECYTPSMA. The cysteines at positions 120 and 129 are disulfide-linked.

It belongs to the melanin-concentrating hormone family. Pituitary gland. Produced in neurons of lateral basal hypothalamus which project both to the brain and to the neural lobe of the pituitary gland from where MCH is released.

In terms of biological role, plays a role in skin pigmentation by antagonizing the action of melanotropin alpha. Induces melanin concentration within the melanophores. May participate in the control of the hypothalamo-pituitary adrenal gland axis by inhibiting the release of ACTH. In Oncorhynchus keta (Chum salmon), this protein is Pro-MCH 2 (mch2).